Reading from the N-terminus, the 210-residue chain is MLDAIRKNGVTLAVFAAITTGLTAVINAVTKPTIEHQTAVQQKILLDQVVPPELYNNRIQDECYSVTDPALGNTNPHHLYLARKDDKPVAVALETTAPDGYSGNIQMIVGASFDGIVYGTRVVEHHETPGLGDKIELRISDWINSFNGKKVNGPSDGHFAVKKDGGDFDQFTGATITPRAVVNAVKRTTLYIETLPGQLSSLPTCGDANE.

Residues 9-29 (GVTLAVFAAITTGLTAVINAV) traverse the membrane as a helical segment. FMN phosphoryl threonine is present on Thr175.

This sequence belongs to the RnfG family. The complex is composed of six subunits: RnfA, RnfB, RnfC, RnfD, RnfE and RnfG. FMN serves as cofactor.

The protein localises to the cell inner membrane. In terms of biological role, part of a membrane-bound complex that couples electron transfer with translocation of ions across the membrane. This is Ion-translocating oxidoreductase complex subunit G from Erwinia tasmaniensis (strain DSM 17950 / CFBP 7177 / CIP 109463 / NCPPB 4357 / Et1/99).